Reading from the N-terminus, the 313-residue chain is 18S rRNA aminocarboxypropyltransferase (313 aa).

A disordered region spans residues 1–30 (MGKGKNKMHEPKNGRPQRGANGHSSRQNHR). S-adenosyl-L-methionine is bound by residues Ser62, Val110, Leu133, and Trp148. Residues 215–228 (KETQERKSRAKEED) are compositionally biased toward basic and acidic residues. The tract at residues 215-313 (KETQERKSRA…SYDPLGNLIR (99 aa)) is disordered. The span at 237–246 (RRGNGSQSDT) shows a compositional bias: polar residues. A compositionally biased stretch (acidic residues) spans 247–257 (SESEENSEQSD). Phosphoserine occurs at positions 286 and 289.

The protein belongs to the TDD superfamily. TSR3 family.

It is found in the cytoplasm. Its subcellular location is the nucleus. The enzyme catalyses an N(1)-methylpseudouridine in rRNA + S-adenosyl-L-methionine = N(1)-methyl-N(3)-[(3S)-3-amino-3-carboxypropyl]pseudouridine in rRNA + S-methyl-5'-thioadenosine + H(+). It carries out the reaction N(1)-methylpseudouridine(1191) in yeast 18S rRNA + S-adenosyl-L-methionine = N(1)-methyl-N(3)-[(3S)-3-amino-3-carboxypropyl]pseudouridine(1191) in yeast 18S rRNA + S-methyl-5'-thioadenosine + H(+). Functionally, aminocarboxypropyltransferase that catalyzes the aminocarboxypropyl transfer on pseudouridine at position 1191 (Psi1191) in 18S rRNA. It constitutes the last step in biosynthesis of the hypermodified N1-methyl-N3-(3-amino-3-carboxypropyl) pseudouridine (m1acp3-Psi) conserved in eukaryotic 18S rRNA. Required for processing 35S pre-rRNA at site D. The chain is 18S rRNA aminocarboxypropyltransferase from Saccharomyces cerevisiae (strain ATCC 204508 / S288c) (Baker's yeast).